Reading from the N-terminus, the 561-residue chain is Arginine--tRNA ligase (561 aa).

Residues 129–139 (ANPTGPLHVGH) carry the 'HIGH' region motif.

This sequence belongs to the class-I aminoacyl-tRNA synthetase family. Monomer.

Its subcellular location is the cytoplasm. The enzyme catalyses tRNA(Arg) + L-arginine + ATP = L-arginyl-tRNA(Arg) + AMP + diphosphate. The chain is Arginine--tRNA ligase from Bordetella petrii (strain ATCC BAA-461 / DSM 12804 / CCUG 43448).